The chain runs to 664 residues: Chaperone protein DnaK (664 aa).

A Phosphothreonine; by autocatalysis modification is found at threonine 201. Over residues 574–592 (LKEDASTEKIKEASEELSR) the composition is skewed to basic and acidic residues. The interval 574 to 664 (LKEDASTEKI…DVEIVDKPND (91 aa)) is disordered. The segment covering 600–617 (AMQSQSASAAPSSAANAQ) has biased composition (low complexity). Positions 639–649 (GNSTSASSNNE) are enriched in polar residues.

It belongs to the heat shock protein 70 family.

Its function is as follows. Acts as a chaperone. This Chlamydia felis (strain Fe/C-56) (Chlamydophila felis) protein is Chaperone protein DnaK.